The chain runs to 184 residues: Deoxyuridine 5'-triphosphate nucleotidohydrolase (184 aa).

Polar residues predominate over residues 1-16; the sequence is MPHTQTDAHQNNQENF. A disordered region spans residues 1 to 25; sequence MPHTQTDAHQNNQENFSSSLISSRP. Residues 96-98, Asn-109, 113-115, and Lys-123 contribute to the substrate site; these read RSG and TID. The interval 165–184 is disordered; it reads STKNTVGNRGAGGFGSTGHD. Positions 173–184 are enriched in gly residues; sequence RGAGGFGSTGHD.

It belongs to the dUTPase family. Mg(2+) is required as a cofactor.

The enzyme catalyses dUTP + H2O = dUMP + diphosphate + H(+). It participates in pyrimidine metabolism; dUMP biosynthesis; dUMP from dCTP (dUTP route): step 2/2. In terms of biological role, this enzyme is involved in nucleotide metabolism: it produces dUMP, the immediate precursor of thymidine nucleotides and it decreases the intracellular concentration of dUTP so that uracil cannot be incorporated into DNA. The sequence is that of Deoxyuridine 5'-triphosphate nucleotidohydrolase from Bartonella henselae (strain ATCC 49882 / DSM 28221 / CCUG 30454 / Houston 1) (Rochalimaea henselae).